The following is a 181-amino-acid chain: TATA-box-binding protein (181 aa).

Repeat copies occupy residues 7–83 and 98–173.

It belongs to the TBP family.

In terms of biological role, general factor that plays a role in the activation of archaeal genes transcribed by RNA polymerase. Binds specifically to the TATA box promoter element which lies close to the position of transcription initiation. This is TATA-box-binding protein from Methanococcus maripaludis (strain DSM 14266 / JCM 13030 / NBRC 101832 / S2 / LL).